We begin with the raw amino-acid sequence, 351 residues long: GDSL esterase/lipase At4g26790 (351 aa).

The signal sequence occupies residues 1–25 (MQRNRVLAFLLLAAQLLVKIPETCA). Residue serine 36 is the Nucleophile of the active site. Residue asparagine 118 is glycosylated (N-linked (GlcNAc...) asparagine). Active-site residues include aspartate 326 and histidine 329.

This sequence belongs to the 'GDSL' lipolytic enzyme family.

It localises to the secreted. This Arabidopsis thaliana (Mouse-ear cress) protein is GDSL esterase/lipase At4g26790.